The following is a 332-amino-acid chain: Beta-ketoacyl-[acyl-carrier-protein] synthase III (332 aa).

Residues cysteine 114 and histidine 255 contribute to the active site. Residues 256-260 form an ACP-binding region; it reads QANLR. Asparagine 285 is a catalytic residue.

Belongs to the thiolase-like superfamily. FabH family. Homodimer.

The protein localises to the cytoplasm. It carries out the reaction malonyl-[ACP] + acetyl-CoA + H(+) = 3-oxobutanoyl-[ACP] + CO2 + CoA. It functions in the pathway lipid metabolism; fatty acid biosynthesis. Catalyzes the condensation reaction of fatty acid synthesis by the addition to an acyl acceptor of two carbons from malonyl-ACP. Catalyzes the first condensation reaction which initiates fatty acid synthesis and may therefore play a role in governing the total rate of fatty acid production. Possesses both acetoacetyl-ACP synthase and acetyl transacylase activities. Its substrate specificity determines the biosynthesis of branched-chain and/or straight-chain of fatty acids. The polypeptide is Beta-ketoacyl-[acyl-carrier-protein] synthase III (Sulfurimonas denitrificans (strain ATCC 33889 / DSM 1251) (Thiomicrospira denitrificans (strain ATCC 33889 / DSM 1251))).